A 68-amino-acid chain; its full sequence is Neuronal regeneration-related protein (68 aa).

The disordered stretch occupies residues 21–54; it reads MEGRLPKGRLPVPKEVNRKKNDETNAASLTPLGS. A compositionally biased stretch (polar residues) spans 44–54; the sequence is TNAASLTPLGS.

In terms of assembly, interacts with the latency-associated peptides (LAP) of TGFB1 and TGFB2; the interaction results in a decrease in TGFB autoinduction. Interacts with FLNA. In terms of processing, phosphorylated on Ser-59. Phosphorylation decreases stability and activity.

The protein resides in the cytoplasm. Functionally, may have roles in neural function and cellular differentiation. Ectopic expression promotes axonal regeneration, induces differentiation of fibroblast into myofibroblast, induces myofibroblast ameboid migration, augments motility of gliomas, and increases retinoic-acid regulation of lipid-droplet biogenesis. Down-regulates the expression of TGFB1 and TGFB2 but not of TGFB3. May play a role in the regulation of alveolar generation. This Pongo abelii (Sumatran orangutan) protein is Neuronal regeneration-related protein (NREP).